Here is a 203-residue protein sequence, read N- to C-terminus: Transcriptional regulator GfcR 2 (203 aa).

Belongs to the purine/pyrimidine phosphoribosyltransferase family. GfcR subfamily.

The chain is Transcriptional regulator GfcR 2 from Methanosarcina acetivorans (strain ATCC 35395 / DSM 2834 / JCM 12185 / C2A).